The chain runs to 74 residues: MNTATCFIVLLVVATVIGGIEAGESDMRKDVMGLFRRVICTGADSPCAACCPCCPGTSCKAESNGVSYCRKDEP.

The N-terminal stretch at 1-22 (MNTATCFIVLLVVATVIGGIEA) is a signal peptide. The propeptide occupies 23-35 (GESDMRKDVMGLF). 4 disulfides stabilise this stretch: C40/C54, C47/C59, C50/C51, and C53/C69.

Belongs to the neurotoxin 11 (kappa toxin) family. In terms of tissue distribution, expressed by the venom gland.

It is found in the secreted. Functionally, this excitatory toxin inhibits insect calcium-activated potassium (KCa) channels (Slo-type). The chain is Lambda-hexatoxin-Hv1d from Hadronyche versuta (Blue mountains funnel-web spider).